The following is a 123-amino-acid chain: Small ribosomal subunit protein eS8 (123 aa).

A disordered region spans residues 1-38 (MKDQGRSPRKRTGGRRRPNHKKKKHELGKDTVETQVGE). The segment covering 7–26 (SPRKRTGGRRRPNHKKKKHE) has biased composition (basic residues).

In terms of assembly, part of the 30S ribosomal subunit.

The polypeptide is Small ribosomal subunit protein eS8 (rps8e) (Haloarcula marismortui (strain ATCC 43049 / DSM 3752 / JCM 8966 / VKM B-1809) (Halobacterium marismortui)).